The chain runs to 121 residues: Large ribosomal subunit protein uL14c (121 aa).

The protein belongs to the universal ribosomal protein uL14 family. As to quaternary structure, part of the 50S ribosomal subunit.

It localises to the plastid. The protein resides in the apicoplast. Binds to 23S rRNA. This Eimeria tenella (Coccidian parasite) protein is Large ribosomal subunit protein uL14c (rpl14).